Reading from the N-terminus, the 349-residue chain is tRNA pseudouridine synthase D (349 aa).

Phe-27 provides a ligand contact to substrate. Asp-80 functions as the Nucleophile in the catalytic mechanism. Asn-129 is a binding site for substrate. The TRUD domain maps to 155–303; sequence GVPNYFGAQR…VEASRRAMLL (149 aa). Phe-329 is a binding site for substrate.

This sequence belongs to the pseudouridine synthase TruD family.

The catalysed reaction is uridine(13) in tRNA = pseudouridine(13) in tRNA. Responsible for synthesis of pseudouridine from uracil-13 in transfer RNAs. The polypeptide is tRNA pseudouridine synthase D (Salmonella dublin (strain CT_02021853)).